The following is a 751-amino-acid chain: Photosystem I P700 chlorophyll a apoprotein A1 (751 aa).

A run of 8 helical transmembrane segments spans residues 73-96, 159-182, 198-222, 294-312, 349-372, 388-414, 436-458, and 533-551; these read VFSA…FHGA, LYIT…FHYH, LNHH…HVSL, VAHH…GHMY, WHAQ…QHMY, LSLF…IFMV, AIIS…LYIH, and FLVH…LILL. [4Fe-4S] cluster is bound by residues cysteine 575 and cysteine 584. The next 2 membrane-spanning stretches (helical) occupy residues 591–612 and 665–687; these read HVFL…HFSW and LSAY…MFLF. A chlorophyll a'-binding site is contributed by histidine 676. The chlorophyll a site is built by methionine 684 and tyrosine 692. Tryptophan 693 is a binding site for phylloquinone. The helical transmembrane segment at 725–745 threads the bilayer; sequence AVGVAHYLLGGIATTWSFFLA.

The protein belongs to the PsaA/PsaB family. As to quaternary structure, the PsaA/B heterodimer binds the P700 chlorophyll special pair and subsequent electron acceptors. PSI consists of a core antenna complex that captures photons, and an electron transfer chain that converts photonic excitation into a charge separation. The eukaryotic PSI reaction center is composed of at least 11 subunits. Requires P700 is a chlorophyll a/chlorophyll a' dimer, A0 is one or more chlorophyll a, A1 is one or both phylloquinones and FX is a shared 4Fe-4S iron-sulfur center. as cofactor.

Its subcellular location is the plastid. The protein localises to the chloroplast thylakoid membrane. It carries out the reaction reduced [plastocyanin] + hnu + oxidized [2Fe-2S]-[ferredoxin] = oxidized [plastocyanin] + reduced [2Fe-2S]-[ferredoxin]. PsaA and PsaB bind P700, the primary electron donor of photosystem I (PSI), as well as the electron acceptors A0, A1 and FX. PSI is a plastocyanin/cytochrome c6-ferredoxin oxidoreductase, converting photonic excitation into a charge separation, which transfers an electron from the donor P700 chlorophyll pair to the spectroscopically characterized acceptors A0, A1, FX, FA and FB in turn. Oxidized P700 is reduced on the lumenal side of the thylakoid membrane by plastocyanin or cytochrome c6. This is Photosystem I P700 chlorophyll a apoprotein A1 from Euglena gracilis.